The following is a 310-amino-acid chain: Zinc transporter ZIP9 (310 aa).

Transmembrane regions (helical) follow at residues 7–27 (ISLL…IPLA), 35–55 (LKLI…AVII), 108–128 (ACIG…DQIG), 148–168 (ITTT…LGAA), 178–198 (LIVF…LVSF), 212–232 (HLLV…LGLS), 246–266 (GVAM…HVLP), and 289–309 (VEVV…VGHH).

It belongs to the ZIP transporter (TC 2.A.5) family. Expressed in brain, liver, ovary, and testis.

It is found in the golgi apparatus. The protein localises to the trans-Golgi network membrane. The protein resides in the cell membrane. Its subcellular location is the cytoplasm. It localises to the perinuclear region. It is found in the mitochondrion. The protein localises to the nucleus. It carries out the reaction Zn(2+)(in) = Zn(2+)(out). Its function is as follows. Has dual functions as a membrane-bound androgen receptor and as an androgen-dependent zinc transporter both of which are mediated through G protein activation and are required for the androgen-dependent apoptotic response. Upon androgen binding, mediates apoptosis by directly activating a stimulatory G protein that leads to increased cAMP levels and MAP kinase activity and which is accompanied by increased intracellular free zinc levels. This Micropogonias undulatus (Atlantic croaker) protein is Zinc transporter ZIP9.